The sequence spans 283 residues: Bifunctional protein FolD (283 aa).

NADP(+) is bound by residues 165 to 167 (GRS), Ser190, and Val231.

It belongs to the tetrahydrofolate dehydrogenase/cyclohydrolase family. In terms of assembly, homodimer. Interacts with BrxC.

It catalyses the reaction (6R)-5,10-methylene-5,6,7,8-tetrahydrofolate + NADP(+) = (6R)-5,10-methenyltetrahydrofolate + NADPH. The catalysed reaction is (6R)-5,10-methenyltetrahydrofolate + H2O = (6R)-10-formyltetrahydrofolate + H(+). It participates in one-carbon metabolism; tetrahydrofolate interconversion. Catalyzes the oxidation of 5,10-methylenetetrahydrofolate to 5,10-methenyltetrahydrofolate and then the hydrolysis of 5,10-methenyltetrahydrofolate to 10-formyltetrahydrofolate. The sequence is that of Bifunctional protein FolD from Bacillus subtilis (strain 168).